The primary structure comprises 237 residues: Adenosine 5'-phosphosulfate reductase (237 aa).

Cysteine 123, cysteine 124, cysteine 206, and cysteine 209 together coordinate [4Fe-4S] cluster. Cysteine 232 functions as the Nucleophile; cysteine thiosulfonate intermediate in the catalytic mechanism.

Belongs to the PAPS reductase family. CysH subfamily. [4Fe-4S] cluster serves as cofactor.

It localises to the cytoplasm. It carries out the reaction [thioredoxin]-disulfide + sulfite + AMP + 2 H(+) = adenosine 5'-phosphosulfate + [thioredoxin]-dithiol. Its pathway is sulfur metabolism; hydrogen sulfide biosynthesis; sulfite from sulfate. In terms of biological role, catalyzes the formation of sulfite from adenosine 5'-phosphosulfate (APS) using thioredoxin as an electron donor. In Mycobacteroides abscessus (strain ATCC 19977 / DSM 44196 / CCUG 20993 / CIP 104536 / JCM 13569 / NCTC 13031 / TMC 1543 / L948) (Mycobacterium abscessus), this protein is Adenosine 5'-phosphosulfate reductase.